Consider the following 89-residue polypeptide: Small ribosomal subunit protein uS15 (89 aa).

It belongs to the universal ribosomal protein uS15 family. As to quaternary structure, part of the 30S ribosomal subunit. Forms a bridge to the 50S subunit in the 70S ribosome, contacting the 23S rRNA.

In terms of biological role, one of the primary rRNA binding proteins, it binds directly to 16S rRNA where it helps nucleate assembly of the platform of the 30S subunit by binding and bridging several RNA helices of the 16S rRNA. Functionally, forms an intersubunit bridge (bridge B4) with the 23S rRNA of the 50S subunit in the ribosome. The sequence is that of Small ribosomal subunit protein uS15 from Streptococcus pyogenes serotype M2 (strain MGAS10270).